The primary structure comprises 427 residues: 3-isopropylmalate dehydratase large subunit (427 aa).

The [4Fe-4S] cluster site is built by Cys-308, Cys-368, and Cys-371.

Belongs to the aconitase/IPM isomerase family. LeuC type 2 subfamily. As to quaternary structure, heterodimer of LeuC and LeuD. [4Fe-4S] cluster serves as cofactor.

The enzyme catalyses (2R,3S)-3-isopropylmalate = (2S)-2-isopropylmalate. It functions in the pathway amino-acid biosynthesis; L-leucine biosynthesis; L-leucine from 3-methyl-2-oxobutanoate: step 2/4. Functionally, catalyzes the isomerization between 2-isopropylmalate and 3-isopropylmalate, via the formation of 2-isopropylmaleate. The polypeptide is 3-isopropylmalate dehydratase large subunit (Citrifermentans bemidjiense (strain ATCC BAA-1014 / DSM 16622 / JCM 12645 / Bem) (Geobacter bemidjiensis)).